Here is a 261-residue protein sequence, read N- to C-terminus: DNA repair protein RecO (261 aa).

Belongs to the RecO family.

Its function is as follows. Involved in DNA repair and RecF pathway recombination. The polypeptide is DNA repair protein RecO (Chlorobium limicola (strain DSM 245 / NBRC 103803 / 6330)).